Reading from the N-terminus, the 984-residue chain is E3 ubiquitin-protein ligase BRE1A (984 aa).

Positions Met1–Thr34 are disordered. The stretch at Thr43–Leu90 forms a coiled coil. The tract at residues Val128 to Glu150 is disordered. Over residues Asn139 to Glu150 the composition is skewed to basic and acidic residues. Coiled coils occupy residues Ala236–Thr378 and Ser429–Lys907. The segment at Ser506 to Ala632 is disordered. Positions Arg514–Thr526 are enriched in polar residues. Basic and acidic residues-rich tracts occupy residues Glu527 to Pro540 and Ser558 to Ala632. The RING-type zinc-finger motif lies at Cys931 to Asn970.

Belongs to the BRE1 family. Component of the RNF20/40 complex (also known as BRE1 complex).

The protein resides in the nucleus. It catalyses the reaction S-ubiquitinyl-[E2 ubiquitin-conjugating enzyme]-L-cysteine + [acceptor protein]-L-lysine = [E2 ubiquitin-conjugating enzyme]-L-cysteine + N(6)-ubiquitinyl-[acceptor protein]-L-lysine.. The protein operates within protein modification; protein ubiquitination. Component of the RNF20/40 E3 ubiquitin-protein ligase complex that mediates monoubiquitination of 'Lys-120' of histone H2B (H2BK120ub1). H2BK120ub1 gives a specific tag for epigenetic transcriptional activation and is also prerequisite for histone H3 'Lys-4' and 'Lys-79' methylation (H3K4me and H3K79me, respectively). The protein is E3 ubiquitin-protein ligase BRE1A (RNF20) of Gallus gallus (Chicken).